An 86-amino-acid chain; its full sequence is Neurotoxin 8-related gene product 1/2/3 (86 aa).

The N-terminal stretch at 1-19 (MNYLTMISLALLVMTGVES) is a signal peptide. One can recognise an LCN-type CS-alpha/beta domain in the interval 22 to 84 (RDAYIADNKN…VPIKVPGKCN (63 aa)). Intrachain disulfides connect C32-C83, C36-C56, C42-C66, and C46-C68. N84 carries the asparagine amide modification.

Belongs to the long (4 C-C) scorpion toxin superfamily. Sodium channel inhibitor family. Alpha subfamily. Expressed by the venom gland.

The protein resides in the secreted. In terms of biological role, binds voltage-dependently at site-3 of sodium channels (Nav) and inhibits the inactivation of the activated channels, thereby blocking neuronal transmission. This Androctonus mauritanicus mauritanicus (Scorpion) protein is Neurotoxin 8-related gene product 1/2/3 (NTVIIIrgp1).